We begin with the raw amino-acid sequence, 273 residues long: 4-hydroxy-tetrahydrodipicolinate reductase (273 aa).

Residues 12 to 17 (GAGGRM) and E38 contribute to the NAD(+) site. R39 provides a ligand contact to NADP(+). Residues 102-104 (GTT) and 126-129 (AANF) contribute to the NAD(+) site. H159 (proton donor/acceptor) is an active-site residue. H160 is a binding site for (S)-2,3,4,5-tetrahydrodipicolinate. Catalysis depends on K163, which acts as the Proton donor. 169-170 (GT) contacts (S)-2,3,4,5-tetrahydrodipicolinate.

This sequence belongs to the DapB family. In terms of assembly, homotetramer.

The protein localises to the cytoplasm. The catalysed reaction is (S)-2,3,4,5-tetrahydrodipicolinate + NAD(+) + H2O = (2S,4S)-4-hydroxy-2,3,4,5-tetrahydrodipicolinate + NADH + H(+). It carries out the reaction (S)-2,3,4,5-tetrahydrodipicolinate + NADP(+) + H2O = (2S,4S)-4-hydroxy-2,3,4,5-tetrahydrodipicolinate + NADPH + H(+). The protein operates within amino-acid biosynthesis; L-lysine biosynthesis via DAP pathway; (S)-tetrahydrodipicolinate from L-aspartate: step 4/4. In terms of biological role, catalyzes the conversion of 4-hydroxy-tetrahydrodipicolinate (HTPA) to tetrahydrodipicolinate. In Shigella boydii serotype 4 (strain Sb227), this protein is 4-hydroxy-tetrahydrodipicolinate reductase.